We begin with the raw amino-acid sequence, 584 residues long: Protein FAM117B (584 aa).

The disordered stretch occupies residues 1 to 214; that stretch reads MSQRVRRNGS…SSSSSIIRRT (214 aa). Ser10 carries the post-translational modification Phosphoserine. Positions 53-79 are enriched in gly residues; the sequence is TRGGGGGGNNGGNGGASGPSGGGGSGG. The segment covering 80–90 has biased composition (low complexity); it reads PRTASRSTSPT. Phosphoserine is present on Ser102. Residues 114–132 are compositionally biased toward low complexity; sequence TSTRGTSPTRGTAPGARSS. Positions 133–142 are enriched in pro residues; sequence PPRPQPPPPL. Polar residues predominate over residues 145–154; it reads TVSSPSSSPT. The segment covering 204–214 has biased composition (low complexity); that stretch reads SSSSSSIIRRT. Ser206, Ser215, Ser216, and Ser268 each carry phosphoserine. 2 disordered regions span residues 227 to 461 and 551 to 584; these read GHWP…SYMF and STNTEQERVSRGTSTVLPSASLHAPPEPIEEAEG. Basic residues predominate over residues 287 to 297; it reads RSKHSSRHHRD. Residue Ser340 is modified to Phosphoserine. Residues 350-361 show a composition bias toward basic and acidic residues; it reads IIIKETGEKEEQ. Residues 379 to 392 are compositionally biased toward polar residues; sequence QRSSSTRSIDTQTP. Ser386 is modified (phosphoserine). Positions 399 to 412 are enriched in low complexity; sequence SNNSSRSQSVSPTS. Phosphoserine is present on residues Ser444 and Ser452.

The polypeptide is Protein FAM117B (Fam117b) (Mus musculus (Mouse)).